The primary structure comprises 502 residues: Na(+)/H(+) antiporter NhaB (502 aa).

Transmembrane regions (helical) follow at residues 27-49 (AFLVINPVVYAIDPFIAGWVLIL), 66-86 (PGGLLAIEAVILGMTSPESVF), 95-115 (VILLLIFMVAGIYFMKDLLLY), 128-148 (IVLSLLFSLVAAVLSAFLDAL), 149-169 (TVTAVLIAVAVGFYAVYHQFA), 241-261 (FFLQVAPVSMPTLIGGLVTCI), 299-318 (IAALVVQALAGVVLMVSLAL), 350-370 (FEEALPFTALLVVFFAVVAVI), 394-414 (MFFIANGLLSMISDNVFVATV), 450-470 (ATPNGQAAFLFLLTSALAPLI), and 477-497 (MVLMALPYTIVLSVIGYIAVY).

This sequence belongs to the NhaB Na(+)/H(+) (TC 2.A.34) antiporter family.

The protein localises to the cell inner membrane. The enzyme catalyses 2 Na(+)(in) + 3 H(+)(out) = 2 Na(+)(out) + 3 H(+)(in). Na(+)/H(+) antiporter that extrudes sodium in exchange for external protons. In Teredinibacter turnerae (strain ATCC 39867 / T7901), this protein is Na(+)/H(+) antiporter NhaB.